A 185-amino-acid polypeptide reads, in one-letter code: Elongation factor P (185 aa).

It belongs to the elongation factor P family.

The protein resides in the cytoplasm. The protein operates within protein biosynthesis; polypeptide chain elongation. In terms of biological role, involved in peptide bond synthesis. Stimulates efficient translation and peptide-bond synthesis on native or reconstituted 70S ribosomes in vitro. Probably functions indirectly by altering the affinity of the ribosome for aminoacyl-tRNA, thus increasing their reactivity as acceptors for peptidyl transferase. The protein is Elongation factor P of Staphylococcus aureus (strain Mu3 / ATCC 700698).